Here is a 99-residue protein sequence, read N- to C-terminus: HssA/B-like protein 42 (99 aa).

Residues 1–29 (MTLFSSISSMSTSMSGSKSSISSFGSGTS) are disordered.

Belongs to the hssA/B family.

In Dictyostelium discoideum (Social amoeba), this protein is HssA/B-like protein 42 (hssl42).